We begin with the raw amino-acid sequence, 130 residues long: Anti-adapter protein IraD (130 aa).

It belongs to the GpW/Gp25 family. IraD subfamily. Interacts with RssB.

The protein localises to the cytoplasm. In terms of biological role, inhibits RpoS proteolysis by regulating RssB activity, thereby increasing the stability of the sigma stress factor RpoS during oxidative stress. Its effect on RpoS stability is due to its interaction with RssB, which probably blocks the interaction of RssB with RpoS, and the consequent delivery of the RssB-RpoS complex to the ClpXP protein degradation pathway. This chain is Anti-adapter protein IraD, found in Escherichia coli O139:H28 (strain E24377A / ETEC).